The chain runs to 595 residues: Beta-(1--&gt;2)glucan export ATP-binding/permease protein NdvA (595 aa).

The 281-residue stretch at 21 to 301 (SLLICSANVM…MSNFINLTIS (281 aa)) folds into the ABC transmembrane type-1 domain. The next 5 helical transmembrane spans lie at 22 to 42 (LLICSANVMLAIITIAEPILF), 55 to 75 (IIPTLTIWVCFGISHILAYVL), 129 to 149 (IWLDFMRQHLSTLVALFVLIP), 152 to 172 (FNMNWRLSIVLVVLAIIYVLI), and 248 to 268 (MASTISIVCVLLLGAFFVAKG). In terms of domain architecture, ABC transporter spans 335 to 569 (IQFHHVTYKF…GGRFYKLLKA (235 aa)). 368–375 (GPTGAGKT) serves as a coordination point for ATP.

It belongs to the ABC transporter superfamily. Beta-(1--&gt;2)glucan exporter (TC 3.A.1.108.1) family. Homodimer.

The protein resides in the cell inner membrane. It carries out the reaction [(1-&gt;2)-beta-D-glucosyl](n)(in) + ATP + H2O = [(1-&gt;2)-beta-D-glucosyl](n)(out) + ADP + phosphate + H(+). Involved in beta-(1--&gt;2)glucan export. Transmembrane domains (TMD) form a pore in the inner membrane and the ATP-binding domain (NBD) is responsible for energy generation. The sequence is that of Beta-(1--&gt;2)glucan export ATP-binding/permease protein NdvA from Bartonella henselae (strain ATCC 49882 / DSM 28221 / CCUG 30454 / Houston 1) (Rochalimaea henselae).